The following is a 224-amino-acid chain: Flagellar L-ring protein (224 aa).

Residues 1-15 form the signal peptide; the sequence is MARYLVLAVALLLAA. Cysteine 16 is lipidated: N-palmitoyl cysteine. Cysteine 16 carries S-diacylglycerol cysteine lipidation.

The protein belongs to the FlgH family. In terms of assembly, the basal body constitutes a major portion of the flagellar organelle and consists of four rings (L,P,S, and M) mounted on a central rod.

The protein resides in the cell outer membrane. It is found in the bacterial flagellum basal body. Functionally, assembles around the rod to form the L-ring and probably protects the motor/basal body from shearing forces during rotation. The chain is Flagellar L-ring protein from Shewanella baltica (strain OS223).